Reading from the N-terminus, the 316-residue chain is Pantothenate kinase (316 aa).

95-102 (GSVAVGKS) provides a ligand contact to ATP.

It belongs to the prokaryotic pantothenate kinase family.

It localises to the cytoplasm. It catalyses the reaction (R)-pantothenate + ATP = (R)-4'-phosphopantothenate + ADP + H(+). It functions in the pathway cofactor biosynthesis; coenzyme A biosynthesis; CoA from (R)-pantothenate: step 1/5. This is Pantothenate kinase from Erwinia tasmaniensis (strain DSM 17950 / CFBP 7177 / CIP 109463 / NCPPB 4357 / Et1/99).